A 609-amino-acid chain; its full sequence is UvrABC system protein C (609 aa).

In terms of domain architecture, GIY-YIG spans 22 to 100 (EKPGVYQYLN…IKKYKPRYNV (79 aa)). The UVR domain maps to 214–249 (QDISRMLVEKMQELANEMKFEEAQKIKEKYLLIENY).

It belongs to the UvrC family. In terms of assembly, interacts with UvrB in an incision complex.

It localises to the cytoplasm. Functionally, the UvrABC repair system catalyzes the recognition and processing of DNA lesions. UvrC both incises the 5' and 3' sides of the lesion. The N-terminal half is responsible for the 3' incision and the C-terminal half is responsible for the 5' incision. The polypeptide is UvrABC system protein C (Bacteroides thetaiotaomicron (strain ATCC 29148 / DSM 2079 / JCM 5827 / CCUG 10774 / NCTC 10582 / VPI-5482 / E50)).